We begin with the raw amino-acid sequence, 221 residues long: Transmembrane emp24 domain-containing protein 3 (221 aa).

An N-terminal signal peptide occupies residues 1–30; the sequence is MGNEVPRASSFQMLMLLLLLLLLRAERLRG. The Lumenal segment spans residues 31 to 184; that stretch reads AELTFELPDN…RAEDLNSRVS (154 aa). The GOLD domain occupies 42 to 124; sequence KQCFHEEVEQ…HKTVYFDFQV (83 aa). Arginine 103 carries the post-translational modification Dimethylated arginine. A helical transmembrane segment spans residues 185-205; that stretch reads YWSVGETIALFVVSFSQVLLL. Residues 206-221 are Cytoplasmic-facing; that stretch reads KSFFTEKRPINRAVHS. The COPII vesicle coat-binding motif lies at 208 to 209; it reads FF. A COPI vesicle coat-binding motif is present at residues 208–221; the sequence is FFTEKRPINRAVHS.

This sequence belongs to the EMP24/GP25L family. Monomer in endoplasmic reticulum, endoplasmic reticulum-Golgi intermediate compartment and cis-Golgi network. Interacts (via C-terminus) with COPG1; the interaction involves dimeric TMED3; however, there are conflicting reports on the interaction. Interacts with GORASP1 and GORASP2.

The protein localises to the endoplasmic reticulum-Golgi intermediate compartment membrane. Its subcellular location is the golgi apparatus. The protein resides in the cis-Golgi network membrane. It is found in the golgi stack membrane. It localises to the endoplasmic reticulum membrane. The protein localises to the cytoplasmic vesicle. Its subcellular location is the COPI-coated vesicle membrane. Functionally, potential role in vesicular protein trafficking, mainly in the early secretory pathway. Contributes to the coupled localization of TMED2 and TMED10 in the cis-Golgi network. In Rattus norvegicus (Rat), this protein is Transmembrane emp24 domain-containing protein 3 (Tmed3).